The following is a 103-amino-acid chain: Phosphoribosyl-ATP pyrophosphatase (103 aa).

Belongs to the PRA-PH family.

The protein localises to the cytoplasm. It catalyses the reaction 1-(5-phospho-beta-D-ribosyl)-ATP + H2O = 1-(5-phospho-beta-D-ribosyl)-5'-AMP + diphosphate + H(+). The protein operates within amino-acid biosynthesis; L-histidine biosynthesis; L-histidine from 5-phospho-alpha-D-ribose 1-diphosphate: step 2/9. This is Phosphoribosyl-ATP pyrophosphatase from Listeria monocytogenes serotype 4a (strain HCC23).